Consider the following 327-residue polypeptide: DNA-directed RNA polymerase subunit alpha (327 aa).

Residues 1–233 are alpha N-terminal domain (alpha-NTD); sequence MVREKVKVST…NLFIPFLHVE (233 aa). An alpha C-terminal domain (alpha-CTD) region spans residues 267-327; the sequence is LAFQYIFIDQ…KKILDILEKK (61 aa).

The protein belongs to the RNA polymerase alpha chain family. In plastids the minimal PEP RNA polymerase catalytic core is composed of four subunits: alpha, beta, beta', and beta''. When a (nuclear-encoded) sigma factor is associated with the core the holoenzyme is formed, which can initiate transcription.

Its subcellular location is the plastid. The protein localises to the chloroplast. The catalysed reaction is RNA(n) + a ribonucleoside 5'-triphosphate = RNA(n+1) + diphosphate. DNA-dependent RNA polymerase catalyzes the transcription of DNA into RNA using the four ribonucleoside triphosphates as substrates. This is DNA-directed RNA polymerase subunit alpha from Lobularia maritima (Sweet alyssum).